The following is a 431-amino-acid chain: MKNWRTFILGLALCANGALAAPQVVDKVAAVVDNGIVLESEVDNMLSTVKHGAQEANQQLPDDTTLRRQILDRLIMDNIILQLAQRTNITISDEQLDQAIGNIAAQNHMSLDQLRSRLPYDGIDYNTYRTQIRKEMLIAEVRNGEVRRRVTILPQEVESLAQQIAAQTGNGAEFNLSHILIPLPENPTQDQLDKAEELATSIVEQSKSGADFGKLAITYSADAQALKGGQMGWGKLEELPSLFAARLQGAQKGSIVGPIRSGVGFHILKVNDIRGGDQKVAVTEVHARHIMLRTSVVMTDQQARAKLEDIAAQIKSGRISFAAAAKQLSEDPGSANQGGDLGWSSADAFDPAFRNALMHLKKGEISTPVHSSFGWHLIQLIDTRQVDRTDAAQKDRAYRLLFNRKFAEEAQTWMQEQRASAYVKILDSNGQ.

Residues 1–20 (MKNWRTFILGLALCANGALA) form the signal peptide. PpiC domains lie at 171 to 272 (GAEF…KVND) and 282 to 382 (VTEV…QLID).

The protein resides in the periplasm. The catalysed reaction is [protein]-peptidylproline (omega=180) = [protein]-peptidylproline (omega=0). Chaperone involved in the correct folding and assembly of outer membrane proteins. Recognizes specific patterns of aromatic residues and the orientation of their side chains, which are found more frequently in integral outer membrane proteins. May act in both early periplasmic and late outer membrane-associated steps of protein maturation. This Sodalis glossinidius (strain morsitans) protein is Chaperone SurA.